The sequence spans 429 residues: Serine--tRNA ligase (429 aa).

236–238 contacts L-serine; sequence TAE. ATP is bound at residue 267-269; it reads RSE. Residue Glu290 participates in L-serine binding. ATP is bound at residue 354-357; the sequence is EVSS. Position 390 (Ser390) interacts with L-serine.

Belongs to the class-II aminoacyl-tRNA synthetase family. Type-1 seryl-tRNA synthetase subfamily. As to quaternary structure, homodimer. The tRNA molecule binds across the dimer.

The protein localises to the cytoplasm. The catalysed reaction is tRNA(Ser) + L-serine + ATP = L-seryl-tRNA(Ser) + AMP + diphosphate + H(+). The enzyme catalyses tRNA(Sec) + L-serine + ATP = L-seryl-tRNA(Sec) + AMP + diphosphate + H(+). The protein operates within aminoacyl-tRNA biosynthesis; selenocysteinyl-tRNA(Sec) biosynthesis; L-seryl-tRNA(Sec) from L-serine and tRNA(Sec): step 1/1. Its function is as follows. Catalyzes the attachment of serine to tRNA(Ser). Is also able to aminoacylate tRNA(Sec) with serine, to form the misacylated tRNA L-seryl-tRNA(Sec), which will be further converted into selenocysteinyl-tRNA(Sec). The sequence is that of Serine--tRNA ligase from Wigglesworthia glossinidia brevipalpis.